Reading from the N-terminus, the 119-residue chain is Platelet basic protein (119 aa).

The first 33 residues, 1-33, serve as a signal peptide directing secretion; it reads MSLRLGAISSCTTSSPFPVLQVLLPLSLLLTTL. The propeptide occupies 34–39; sequence VPATMG. Cystine bridges form between Cys54–Cys80 and Cys56–Cys96.

It localises to the secreted. Chemoattractant factor for neutrophils. This is Platelet basic protein (PPBP) from Sus scrofa (Pig).